A 334-amino-acid polypeptide reads, in one-letter code: Leucine-rich repeat-containing protein 39 (334 aa).

Residues 10 to 47 are a coiled coil; that stretch reads AVNAVKEVWEKRIKKLNEDLKREKEFQQKLVRIWEERV. LRR repeat units lie at residues 84–105, 107–128, 130–151, 153–176, 177–198, 200–221, 223–244, 246–267, and 269–290; these read QLQE…IGRF, NLIV…IGLL, RLQE…LSYC, SLEK…SNLL, KLTH…VLNM, ALEW…IERM, NLHT…ISSM, NLST…MEKM, and NLRF…PPSE.

In terms of assembly, interacts with MYH7 (via C-terminus).

The protein localises to the cytoplasm. It localises to the myofibril. It is found in the sarcomere. Its subcellular location is the m line. Functionally, component of the sarcomeric M-band which plays a role in myocyte response to biomechanical stress. May regulate expression of other M-band proteins via an SRF-dependent pathway. Important for normal contractile function in heart. The chain is Leucine-rich repeat-containing protein 39 from Bos taurus (Bovine).